A 699-amino-acid polypeptide reads, in one-letter code: Cell pattern formation-associated protein StuA (699 aa).

Disordered regions lie at residues 1–20 (MDGT…LLAP) and 31–97 (TPQF…QPEH). Positions 32-49 (PQFKSQQSQPQSQSQYPS) are enriched in low complexity. Residues 52–61 (NPDSYSSSSP) show a composition bias toward polar residues. Over residues 75–84 (EDGEDYDQEE) the composition is skewed to acidic residues. The 107-residue stretch at 226–332 (RVTATLWEDE…HNIGALLYHP (107 aa)) folds into the HTH APSES-type domain. The H-T-H motif DNA-binding region spans 260 to 281 (GTKLLNVAGMTRGRRDGILKSE). 3 disordered regions span residues 372 to 594 (AMPT…MNSM), 599 to 618 (RRDD…DLNN), and 674 to 699 (PSYP…QSFG). A compositionally biased stretch (polar residues) spans 376-423 (GYTSQQPLTNGHQSMANTPQPLTNGSQPPMNGSQTPMNGPQPPMQNGG). Composition is skewed to basic and acidic residues over residues 428–438 (RVREDDDDLHR) and 478–491 (GLKR…DMHR). The segment covering 520 to 529 (NLHQPLSNGD) has biased composition (polar residues). A compositionally biased stretch (basic and acidic residues) spans 535-545 (RGRDDDDDVHR). Residues 566 to 594 (TSTSNDMLPQSPYYTLSNGAYQGPMMNSM) are compositionally biased toward polar residues. The interval 669 to 695 (TVAVSPSYPAGPGYELARPVTNVPRRQ) is nuclear localization domain.

This sequence belongs to the EFG1/PHD1/stuA family.

The protein resides in the nucleus. Transcription factor that regulates asexual reproduction. Binds the StuA-response elements (StRE) with the consensus sequence 5'-(A/T)CGCG(T/A)N(A/C)-3' at the promoters of target genes. Controls the expression of the gene clusters involved in the production of deoxynivalenol (DON) and 15-acetyldeoxynivalenol (15ADON). Regulates the expression of genes involved in chitin and glucan metabolism. Also controls catalase activity and cell surface hydrophobicity. Plays an important role in pathogenicity. In Gibberella zeae (strain ATCC MYA-4620 / CBS 123657 / FGSC 9075 / NRRL 31084 / PH-1) (Wheat head blight fungus), this protein is Cell pattern formation-associated protein StuA.